Here is an 871-residue protein sequence, read N- to C-terminus: DNA mismatch repair protein MutS (871 aa).

Position 620–627 (620–627 (GPNMGGKS)) interacts with ATP. A disordered region spans residues 806–837 (HHGGLNEPKQATMELTPPPEAIPSHTEKRNPL).

Belongs to the DNA mismatch repair MutS family.

Its function is as follows. This protein is involved in the repair of mismatches in DNA. It is possible that it carries out the mismatch recognition step. This protein has a weak ATPase activity. The protein is DNA mismatch repair protein MutS of Idiomarina loihiensis (strain ATCC BAA-735 / DSM 15497 / L2-TR).